Reading from the N-terminus, the 266-residue chain is Putative hydro-lyase Jann_2570 (266 aa).

It belongs to the D-glutamate cyclase family.

The protein is Putative hydro-lyase Jann_2570 of Jannaschia sp. (strain CCS1).